A 513-amino-acid polypeptide reads, in one-letter code: PPE family protein PPE4 (513 aa).

3 helical membrane passes run 233–253, 277–297, and 309–329; these read IIIA…PLLF, FLLP…PIVL, and LAAA…AVTG. Disordered regions lie at residues 395-446 and 469-513; these read AAAA…ERGA and LAGD…HDSK.

The protein belongs to the mycobacterial PPE family.

Its subcellular location is the cell membrane. Functionally, important for the siderophore-mediated iron-acquisition function of ESX-3. This Mycobacterium tuberculosis (strain CDC 1551 / Oshkosh) protein is PPE family protein PPE4 (PPE4).